The following is a 382-amino-acid chain: Dual-specificity RNA methyltransferase RlmN (382 aa).

Residue glutamate 96 is the Proton acceptor of the active site. The region spanning 102–342 (QGKRGTLCVS…VRTTRGEDID (241 aa)) is the Radical SAM core domain. A disulfide bond links cysteine 109 and cysteine 345. Positions 116, 120, and 123 each coordinate [4Fe-4S] cluster. S-adenosyl-L-methionine-binding positions include 170–171 (GE), serine 202, 224–226 (SLH), and asparagine 302. Cysteine 345 functions as the S-methylcysteine intermediate in the catalytic mechanism.

The protein belongs to the radical SAM superfamily. RlmN family. The cofactor is [4Fe-4S] cluster.

The protein resides in the cytoplasm. The enzyme catalyses adenosine(2503) in 23S rRNA + 2 reduced [2Fe-2S]-[ferredoxin] + 2 S-adenosyl-L-methionine = 2-methyladenosine(2503) in 23S rRNA + 5'-deoxyadenosine + L-methionine + 2 oxidized [2Fe-2S]-[ferredoxin] + S-adenosyl-L-homocysteine. It catalyses the reaction adenosine(37) in tRNA + 2 reduced [2Fe-2S]-[ferredoxin] + 2 S-adenosyl-L-methionine = 2-methyladenosine(37) in tRNA + 5'-deoxyadenosine + L-methionine + 2 oxidized [2Fe-2S]-[ferredoxin] + S-adenosyl-L-homocysteine. In terms of biological role, specifically methylates position 2 of adenine 2503 in 23S rRNA and position 2 of adenine 37 in tRNAs. m2A2503 modification seems to play a crucial role in the proofreading step occurring at the peptidyl transferase center and thus would serve to optimize ribosomal fidelity. The chain is Dual-specificity RNA methyltransferase RlmN from Pseudomonas fluorescens (strain Pf0-1).